Here is a 309-residue protein sequence, read N- to C-terminus: tRNA pseudouridine synthase B (309 aa).

D39 functions as the Nucleophile in the catalytic mechanism.

The protein belongs to the pseudouridine synthase TruB family. Type 1 subfamily.

It catalyses the reaction uridine(55) in tRNA = pseudouridine(55) in tRNA. Functionally, responsible for synthesis of pseudouridine from uracil-55 in the psi GC loop of transfer RNAs. This is tRNA pseudouridine synthase B from Bacillus licheniformis (strain ATCC 14580 / DSM 13 / JCM 2505 / CCUG 7422 / NBRC 12200 / NCIMB 9375 / NCTC 10341 / NRRL NRS-1264 / Gibson 46).